Consider the following 357-residue polypeptide: Peptide chain release factor 1 (357 aa).

At Gln236 the chain carries N5-methylglutamine.

It belongs to the prokaryotic/mitochondrial release factor family. Methylated by PrmC. Methylation increases the termination efficiency of RF1.

Its subcellular location is the cytoplasm. Functionally, peptide chain release factor 1 directs the termination of translation in response to the peptide chain termination codons UAG and UAA. The polypeptide is Peptide chain release factor 1 (prfA) (Mycobacterium bovis (strain ATCC BAA-935 / AF2122/97)).